The chain runs to 130 residues: Small ribosomal subunit protein uS9 (130 aa).

The protein belongs to the universal ribosomal protein uS9 family.

This Pseudomonas entomophila (strain L48) protein is Small ribosomal subunit protein uS9.